Consider the following 294-residue polypeptide: Protein farnesyltransferase/geranylgeranyltransferase type-1 subunit alpha (294 aa).

PFTA repeat units follow at residues tyrosine 57–serine 91, tyrosine 92–lysine 125, asparagine 126–aspartate 160, tyrosine 161–lysine 194, and serine 199–proline 233.

This sequence belongs to the protein prenyltransferase subunit alpha family. In terms of assembly, heterodimer of an alpha(cwp1) and a beta(cpp1 or cwg2) subunit. Requires Mg(2+) as cofactor.

The catalysed reaction is L-cysteinyl-[protein] + (2E,6E)-farnesyl diphosphate = S-(2E,6E)-farnesyl-L-cysteinyl-[protein] + diphosphate. It catalyses the reaction geranylgeranyl diphosphate + L-cysteinyl-[protein] = S-geranylgeranyl-L-cysteinyl-[protein] + diphosphate. Functionally, catalyzes the transfer of a farnesyl or geranyl-geranyl moiety from farnesyl or geranyl-geranyl diphosphate to a cysteine at the fourth position from the C-terminus of several proteins having the C-terminal sequence Cys-aliphatic-aliphatic-X. The alpha(cwp1) subunit is thought to participate in a stable complex with the substrate. The beta(cpp1 or cwg2) subunits bind the peptide substrate. In Schizosaccharomyces pombe (strain 972 / ATCC 24843) (Fission yeast), this protein is Protein farnesyltransferase/geranylgeranyltransferase type-1 subunit alpha (cwp1).